Reading from the N-terminus, the 127-residue chain is Small ribosomal subunit protein uS12 (127 aa).

Aspartate 89 is subject to 3-methylthioaspartic acid.

The protein belongs to the universal ribosomal protein uS12 family. In terms of assembly, part of the 30S ribosomal subunit. Contacts proteins S8 and S17. May interact with IF1 in the 30S initiation complex.

Its function is as follows. With S4 and S5 plays an important role in translational accuracy. Interacts with and stabilizes bases of the 16S rRNA that are involved in tRNA selection in the A site and with the mRNA backbone. Located at the interface of the 30S and 50S subunits, it traverses the body of the 30S subunit contacting proteins on the other side and probably holding the rRNA structure together. The combined cluster of proteins S8, S12 and S17 appears to hold together the shoulder and platform of the 30S subunit. This is Small ribosomal subunit protein uS12 from Campylobacter fetus subsp. fetus (strain 82-40).